The primary structure comprises 378 residues: Cysteine synthase (378 aa).

The segment at 10 to 31 is disordered; sequence NSEGDSNQQQNNNNNSNNNLKE. Positions 15 to 28 are enriched in low complexity; that stretch reads SNQQQNNNNNSNNN. At Lys-79 the chain carries N6-(pyridoxal phosphate)lysine. Pyridoxal 5'-phosphate-binding positions include 215–219 and Ser-319; that span reads GTGGT.

Belongs to the cysteine synthase/cystathionine beta-synthase family. Requires pyridoxal 5'-phosphate as cofactor.

The enzyme catalyses O-acetyl-L-serine + hydrogen sulfide = L-cysteine + acetate. It participates in amino-acid biosynthesis; L-cysteine biosynthesis; L-cysteine from L-serine: step 2/2. The polypeptide is Cysteine synthase (cysK) (Dictyostelium discoideum (Social amoeba)).